The sequence spans 87 residues: DNA-directed RNA polymerase subunit omega (87 aa).

It belongs to the RNA polymerase subunit omega family. As to quaternary structure, the RNAP catalytic core consists of 2 alpha, 1 beta, 1 beta' and 1 omega subunit. When a sigma factor is associated with the core the holoenzyme is formed, which can initiate transcription.

The catalysed reaction is RNA(n) + a ribonucleoside 5'-triphosphate = RNA(n+1) + diphosphate. Promotes RNA polymerase assembly. Latches the N- and C-terminal regions of the beta' subunit thereby facilitating its interaction with the beta and alpha subunits. In Pseudomonas fluorescens (strain Pf0-1), this protein is DNA-directed RNA polymerase subunit omega.